The chain runs to 89 residues: Large ribosomal subunit protein eL34 (89 aa).

The interval 41–69 is disordered; it reads RPLNGVPRGRPSELRKLPKTAKRPERPYP. Residues 50 to 66 are compositionally biased toward basic and acidic residues; it reads RPSELRKLPKTAKRPER.

Belongs to the eukaryotic ribosomal protein eL34 family.

The protein is Large ribosomal subunit protein eL34 of Thermococcus gammatolerans (strain DSM 15229 / JCM 11827 / EJ3).